The chain runs to 292 residues: MASLKDMRVRIASTKATQKITKAMQMVAASKLRRAQLAAEAARPYAEKMDAVISNIAAASAGSPASSKLLAGTGRDQVHLLLVCTGERGLSGAFNSSIVRLARERALALMNQGKDVKFFCVGRKGYEQLRRQFEKQIIAHVDLRSVRQIGFVHAEDIAKQVIARFDAGEFDVCTLFYSRFKSVIAQIPTAQQIIPLVVEAPAANAAPVALYEYEPEEDEILSALLPRNVGVQIFRALLENNASFYGAQMSAMDNATRNAGEMIRKQTLVYNRTRQAMITKELIEIISGAEAV.

The protein belongs to the ATPase gamma chain family. In terms of assembly, F-type ATPases have 2 components, CF(1) - the catalytic core - and CF(0) - the membrane proton channel. CF(1) has five subunits: alpha(3), beta(3), gamma(1), delta(1), epsilon(1). CF(0) has three main subunits: a, b and c.

It is found in the cell inner membrane. Produces ATP from ADP in the presence of a proton gradient across the membrane. The gamma chain is believed to be important in regulating ATPase activity and the flow of protons through the CF(0) complex. This Bradyrhizobium sp. (strain ORS 278) protein is ATP synthase gamma chain.